The sequence spans 295 residues: Serpentine receptor class gamma-53 (295 aa).

6 helical membrane-spanning segments follow: residues 7-27, 39-61, 121-141, 173-193, 211-230, and 241-261; these read IWLC…VLLS, VITM…RMVF, FYLL…QLLY, CFMS…LYQV, MSLI…AWQT, and IELL…ILLI.

Belongs to the nematode receptor-like protein srg family.

It localises to the membrane. This chain is Serpentine receptor class gamma-53 (srg-53), found in Caenorhabditis elegans.